The primary structure comprises 134 residues: UPF0412 protein YaaI (134 aa).

The first 23 residues, 1-23 (MKSVFTLSASLAISLLLCCTAQA), serve as a signal peptide directing secretion.

It belongs to the UPF0412 family.

The protein is UPF0412 protein YaaI of Escherichia coli (strain SMS-3-5 / SECEC).